The following is a 282-amino-acid chain: Elongation factor Ts (282 aa).

The involved in Mg(2+) ion dislocation from EF-Tu stretch occupies residues 80–83 (TDFV).

Belongs to the EF-Ts family.

The protein localises to the cytoplasm. In terms of biological role, associates with the EF-Tu.GDP complex and induces the exchange of GDP to GTP. It remains bound to the aminoacyl-tRNA.EF-Tu.GTP complex up to the GTP hydrolysis stage on the ribosome. This chain is Elongation factor Ts (tsf), found in Chlamydia pneumoniae (Chlamydophila pneumoniae).